Here is a 156-residue protein sequence, read N- to C-terminus: Transcriptional repressor NrdR (156 aa).

A zinc finger lies at 3-34 (CPSCQFNGTRVVDSRPVDDNKEIRRRRECESC). Positions 49–139 (LVVVKKEGSR…VYRQFKDINV (91 aa)) constitute an ATP-cone domain.

Belongs to the NrdR family. The cofactor is Zn(2+).

Its function is as follows. Negatively regulates transcription of bacterial ribonucleotide reductase nrd genes and operons by binding to NrdR-boxes. The chain is Transcriptional repressor NrdR from Lysinibacillus sphaericus (strain C3-41).